A 227-amino-acid polypeptide reads, in one-letter code: MGYKFMAYGGYFLFCLFFLLMDGWRGMGICLIIVGLALLALEPYKIKAQKNIDKLKENAETLKHFDGGFNPDNFFNTYKTKIAFKESDSLVKIYQLNKDEHIEEYTIPFSNVIESEIALDNQIISKVSKSGIVAGGLLAGGIGAAIGGLSASSIQNEMVKSVTLKITVEDLGKPIHYIDFLPTQEVEGYNIQGYKKDSNVIQQALTNAEYWHGVMDVIIKKANKVAQ.

2 helical membrane-spanning segments follow: residues 16–36 (LFFL…IVGL) and 131–151 (GIVA…GLSA).

Its subcellular location is the cell membrane. This chain is SPbeta prophage-derived uncharacterized membrane protein YomJ (yomJ), found in Bacillus subtilis (strain 168).